Consider the following 416-residue polypeptide: Tyrosine permease (416 aa).

Helical transmembrane passes span 13–33 (GTML…PIAM), 34–54 (AGIW…MMLL), 86–106 (VVVG…YISG), 127–147 (LSVI…SLLV), 153–173 (VLII…IWHV), 192–212 (LPYI…HGNV), 231–251 (IFIG…VTMG), 260–280 (PIIA…GLFT), 286–306 (LILT…ATLG), 337–357 (VVCF…GLAF), and 389–409 (ILNL…LDVF).

It belongs to the amino acid/polyamine transporter 2 family. Mtr/TnaB/TyrP permease subfamily.

It is found in the cell inner membrane. This is Tyrosine permease (tutB) from Enterobacter agglomerans (Erwinia herbicola).